We begin with the raw amino-acid sequence, 253 residues long: DnaJ homolog subfamily C member 8 (253 aa).

N-acetylalanine is present on alanine 2. Position 35 is a phosphoserine (serine 35). A J domain is found at 57–124 (NPFEVLQIDP…QKKRALDVIQ (68 aa)). At lysine 146 the chain carries N6-acetyllysine. A compositionally biased stretch (basic and acidic residues) spans 181–222 (EAKEMHERKRQREEEIEAQEKAKREREWQKNFEESRDGRVDS). The tract at residues 181–253 (EAKEMHERKR…PPKVKMEQRE (73 aa)) is disordered. 2 consecutive short sequence motifs (nuclear localization signal) follow at residues 189–192 (KRQR) and 203–206 (KRER). Serine 222 is modified (phosphoserine). Basic residues predominate over residues 231–240 (KGKKEKKNRT). The segment at 232–253 (GKKEKKNRTFLRPPKVKMEQRE) is essential for polyglutamine aggregation suppression.

In terms of assembly, interacts with SRPK1. Interacts with HSP70 (HSPA1A or HSPA1B). As to expression, ubiquitous.

It is found in the nucleus. In terms of biological role, suppresses polyglutamine (polyQ) aggregation of ATXN3 in neuronal cells. In Homo sapiens (Human), this protein is DnaJ homolog subfamily C member 8 (DNAJC8).